A 952-amino-acid chain; its full sequence is ALS2 C-terminal-like protein (952 aa).

MORN repeat units lie at residues 358 to 380 (YDGE…DGRN), 381 to 403 (HVGT…QASE), 409 to 431 (YKCH…TDEV), 432 to 454 (YKGY…PQAP), 459 to 481 (YTGH…DRGE), 483 to 505 (YIGM…AGVC), 506 to 528 (YQGT…DDSL), and 529 to 552 (YEGT…NGFT). Positions 795 to 941 (LFPDTKLLEF…IQKEDMRPHH (147 aa)) constitute a VPS9 domain.

Homodimer. Forms a heteromeric complex with ALS2. Interacts with ALS2 and RAB5A. Expressed in heart, lung, liver and kidney.

It is found in the cytoplasm. Acts as a guanine nucleotide exchange factor (GEF) for Rab5 GTPase. Regulates the ALS2-mediated endosome dynamics. This Mus musculus (Mouse) protein is ALS2 C-terminal-like protein (Als2cl).